A 467-amino-acid chain; its full sequence is Acetyl-CoA decarbonylase/synthase complex subunit beta (467 aa).

The [Ni-Fe-S] cluster site is built by C193, C196, C282, and C284. Residues 403–428 (RWAEEEEEEEEKAPEEEAPAEEPTME) are disordered. Over residues 405–426 (AEEEEEEEEKAPEEEAPAEEPT) the composition is skewed to acidic residues.

Belongs to the CdhC family. As to quaternary structure, monomer. The ACDS complex is made up of alpha, epsilon, beta, gamma and delta chains with a probable stoichiometry of (alpha(2)epsilon(2))(4)-beta(8)-(gamma(1)delta(1))(8). The cofactor is [Ni-Fe-S] cluster.

It catalyses the reaction Co(I)-[corrinoid Fe-S protein] + acetyl-CoA + H(+) = methyl-Co(III)-[corrinoid Fe-S protein] + CO + CoA. Functionally, part of a complex that catalyzes the reversible cleavage of acetyl-CoA, allowing autotrophic growth from CO(2). The alpha-epsilon complex generates CO from CO(2), while the beta subunit (this protein) combines the CO with CoA and a methyl group to form acetyl-CoA. The methyl group, which is incorporated into acetyl-CoA, is transferred to the beta subunit by a corrinoid iron-sulfur protein (the gamma-delta complex). This is Acetyl-CoA decarbonylase/synthase complex subunit beta from Methanopyrus kandleri (strain AV19 / DSM 6324 / JCM 9639 / NBRC 100938).